A 179-amino-acid polypeptide reads, in one-letter code: Large ribosomal subunit protein uL6c (179 aa).

The protein belongs to the universal ribosomal protein uL6 family. In terms of assembly, part of the 50S ribosomal subunit.

The protein localises to the plastid. It localises to the chloroplast. Its function is as follows. Binds 23S rRNA. The chain is Large ribosomal subunit protein uL6c (rpl6) from Trieres chinensis (Marine centric diatom).